Here is a 1637-residue protein sequence, read N- to C-terminus: Serine/threonine-protein kinase Genghis Khan (1637 aa).

Residues 100-369 form the Protein kinase domain; that stretch reads FDILKIIGRG…IQDFMDHPWF (270 aa). Residues 106 to 114 and K129 each bind ATP; that span reads IGRGAFGEV. D224 functions as the Proton acceptor in the catalytic mechanism. Residues 370–440 form the AGC-kinase C-terminal domain; the sequence is VGIDWKNIRQ…SLTSSSTLDS (71 aa). Coiled-coil stretches lie at residues 473–587, 643–688, and 839–881; these read VDSV…EDAV, SEKL…LKYT, and DELS…DLQK. Residues 538–575 form a disordered region; it reads RNQKQKLSRQVRDKEEELDGAMQKNDSLRNELRKSDKT. Over residues 563 to 575 the composition is skewed to basic and acidic residues; the sequence is DSLRNELRKSDKT. A Phosphothreonine modification is found at T895. The interval 952–971 is disordered; the sequence is NNKDHSSMKEASVSDLSREE. Residues 989–1039 form a Phorbol-ester/DAG-type zinc finger; that stretch reads IHQFLVRTFSSPTKCNHCTSLMVGLTRQGVVCEICGFACHTICCQKVPTTC. Residues 1059–1177 enclose the PH domain; the sequence is GTAYEGYVKV…WVIALGELHR (119 aa). Residues 1203-1489 form the CNH domain; it reads IRNALCSVII…LPLNNLGNVV (287 aa). Residues 1546–1559 form the CRIB domain; sequence ISAPTNFNHISHMG. At S1584 the chain carries Phosphoserine. Residues 1611–1637 are disordered; sequence DYGNDNIISRTPSPMASSFMDGLSNND. The segment covering 1616-1626 has biased composition (polar residues); the sequence is NIISRTPSPMA.

Belongs to the protein kinase superfamily. AGC Ser/Thr protein kinase family. DMPK subfamily. As to quaternary structure, interacts tightly with GTP-bound but not GDP-bound Cdc42.

The catalysed reaction is L-seryl-[protein] + ATP = O-phospho-L-seryl-[protein] + ADP + H(+). It catalyses the reaction L-threonyl-[protein] + ATP = O-phospho-L-threonyl-[protein] + ADP + H(+). In terms of biological role, acts as a downstream effector for the regulation of actin polymerization by Cdc42. The polypeptide is Serine/threonine-protein kinase Genghis Khan (gek) (Drosophila melanogaster (Fruit fly)).